The following is an 89-amino-acid chain: Large ribosomal subunit protein L37-2 (89 aa).

4 residues coordinate Zn(2+): Cys-19, Cys-22, Cys-34, and Cys-37. The C4-type zinc finger occupies 19–37 (CRRCGNSSYHLQKSKCSQC).

It belongs to the eukaryotic ribosomal protein eL37 family. It depends on Zn(2+) as a cofactor.

Functionally, binds to the 23S rRNA. This is Large ribosomal subunit protein L37-2 from Drosophila melanogaster (Fruit fly).